The chain runs to 412 residues: Glucose-1-phosphate adenylyltransferase (412 aa).

Residues glycine 163, 179–180 (EK), and serine 197 each bind alpha-D-glucose 1-phosphate.

Belongs to the bacterial/plant glucose-1-phosphate adenylyltransferase family. In terms of assembly, homotetramer.

It catalyses the reaction alpha-D-glucose 1-phosphate + ATP + H(+) = ADP-alpha-D-glucose + diphosphate. It functions in the pathway glycan biosynthesis; glycogen biosynthesis. Its function is as follows. Involved in the biosynthesis of ADP-glucose, a building block required for the elongation reactions to produce glycogen. Catalyzes the reaction between ATP and alpha-D-glucose 1-phosphate (G1P) to produce pyrophosphate and ADP-Glc. The sequence is that of Glucose-1-phosphate adenylyltransferase from Frankia casuarinae (strain DSM 45818 / CECT 9043 / HFP020203 / CcI3).